The primary structure comprises 207 residues: Large ribosomal subunit protein uL3 (207 aa).

Positions 113 to 148 (KGKGFQGPIKRHGQSRGPMAHGSRYHRRPGSMGPVA) are disordered.

This sequence belongs to the universal ribosomal protein uL3 family. As to quaternary structure, part of the 50S ribosomal subunit. Forms a cluster with proteins L14 and L19.

One of the primary rRNA binding proteins, it binds directly near the 3'-end of the 23S rRNA, where it nucleates assembly of the 50S subunit. This chain is Large ribosomal subunit protein uL3, found in Lactococcus lactis subsp. lactis (strain IL1403) (Streptococcus lactis).